Reading from the N-terminus, the 478-residue chain is G2/mitotic-specific cyclin-B (478 aa).

The tract at residues 1-153 (MNENDENGPS…KTIQQEEPPR (153 aa)) is disordered. Low complexity predominate over residues 16 to 31 (AKAAALTTDAPAANGA). Residues 65–74 (DNGETKDAKK) show a composition bias toward basic and acidic residues. The segment covering 77 to 102 (SKTGLTSKATMQSGGVQKLSRSNLSR) has biased composition (polar residues). Residues 110–121 (NNVKKPATEAKR) are compositionally biased toward basic and acidic residues. The segment covering 133–145 (KRTSSQKSLQEKT) has biased composition (polar residues).

Belongs to the cyclin family. Cyclin AB subfamily.

Functionally, essential for the control of the cell cycle at the G2/M (mitosis) transition. Interacts with the CDC2 protein kinase to form MPF. G2/M cyclins accumulate steadily during G2 and are abruptly destroyed at mitosis. This is G2/mitotic-specific cyclin-B (nimE) from Emericella nidulans (strain FGSC A4 / ATCC 38163 / CBS 112.46 / NRRL 194 / M139) (Aspergillus nidulans).